The sequence spans 155 residues: Small ribosomal subunit protein uS7cz/uS7cy (155 aa).

Belongs to the universal ribosomal protein uS7 family. Part of the 30S ribosomal subunit.

The protein localises to the plastid. It localises to the chloroplast. Functionally, one of the primary rRNA binding proteins, it binds directly to 16S rRNA where it nucleates assembly of the head domain of the 30S subunit. In Nandina domestica (Heavenly bamboo), this protein is Small ribosomal subunit protein uS7cz/uS7cy (rps7-A).